A 56-amino-acid polypeptide reads, in one-letter code: Large ribosomal subunit protein bL32c (56 aa).

The protein belongs to the bacterial ribosomal protein bL32 family.

Its subcellular location is the plastid. The protein localises to the chloroplast. The chain is Large ribosomal subunit protein bL32c from Tupiella akineta (Green alga).